We begin with the raw amino-acid sequence, 400 residues long: MVRIGTPLTDVATRAMLLGSGELGKEVAIELQRFGVEVIAVDRYSNAPAMQVAHRAHVIDMLDPKQLRALIELERPDFIIPEIEAIATAELLELERSGFNVVPSARAANLTMNREGIRRLAAEELGLSTSPYAFAADFESFRDAVSSIGVPCVVKPIMSSSGKGQSVIHSDGDVERAWRYAQEGGRAGQGKVIVEGFVDFDYEVTLLTLRHAGGTSFCDPIGHLQVDGDYRVSWQPHPMSAIALGAAQDIAEKVTVALGGCGIFGVELFVKGDEVYFSEVSPRPHDTGLVTLVSQNLSEFALHARALLGLPVPLIKQTGASASVALLVEGDSSRVCFSSLEAALCHPEVQLRLFGKPEVHGKRRMGVVLAQSENLDEARKLAQKAVDSIVVELGPDIKQE.

Residues 22–23 and glutamate 82 each bind N(1)-(5-phospho-beta-D-ribosyl)glycinamide; that span reads EL. ATP-binding positions include arginine 114, lysine 155, 160 to 165, 195 to 198, and glutamate 203; these read SSGKGQ and EGFV. The region spanning 119-308 is the ATP-grasp domain; the sequence is RLAAEELGLS…EFALHARALL (190 aa). Residues glutamate 267 and glutamate 279 each contribute to the Mg(2+) site. N(1)-(5-phospho-beta-D-ribosyl)glycinamide contacts are provided by residues aspartate 286, lysine 356, and 363–364; that span reads RR.

This sequence belongs to the PurK/PurT family. Homodimer.

The catalysed reaction is N(1)-(5-phospho-beta-D-ribosyl)glycinamide + formate + ATP = N(2)-formyl-N(1)-(5-phospho-beta-D-ribosyl)glycinamide + ADP + phosphate + H(+). The protein operates within purine metabolism; IMP biosynthesis via de novo pathway; N(2)-formyl-N(1)-(5-phospho-D-ribosyl)glycinamide from N(1)-(5-phospho-D-ribosyl)glycinamide (formate route): step 1/1. Functionally, involved in the de novo purine biosynthesis. Catalyzes the transfer of formate to 5-phospho-ribosyl-glycinamide (GAR), producing 5-phospho-ribosyl-N-formylglycinamide (FGAR). Formate is provided by PurU via hydrolysis of 10-formyl-tetrahydrofolate. The protein is Formate-dependent phosphoribosylglycinamide formyltransferase of Hahella chejuensis (strain KCTC 2396).